Here is a 409-residue protein sequence, read N- to C-terminus: Secreted LysM effector Blys2 (409 aa).

An N-terminal signal peptide occupies residues Met1–Ala20. The 48-residue stretch at Tyr24 to Val71 folds into the LysM 1 domain. N-linked (GlcNAc...) asparagine glycosylation is present at Asn58. The interval Asn74–Ser111 is disordered. Low complexity predominate over residues Ser87–Thr106. 4 LysM domains span residues Ala129–Val176, Lys206–Val253, Lys283–Ile330, and Lys357–Val405.

It belongs to the secreted LysM effector family.

Its subcellular location is the secreted. It is found in the cell wall. Secreted effector that enables the plant pathogenic fungus to manipulate host defenses for successful infection. Required for the full virulence to infect insect hosts. In contrast to Blys5, Blys2 is not able to protect fungal hyphae against the hydrolytic activity of chitinase but plays an important role in evasion of insect immunities. Binds chitin. Coats and protects the cell walls of insect pathogens from host cell recognition. The sequence is that of Secreted LysM effector Blys2 from Beauveria bassiana (strain ARSEF 2860) (White muscardine disease fungus).